Consider the following 244-residue polypeptide: Salivary antigen-5 (244 aa).

The signal sequence occupies residues 1–23 (MAKAHSSLVFCLLALALVRFAQA). An SCP domain is found at 46-202 (LDFHNKFREL…WYTGYLVCNY (157 aa)). N-linked (GlcNAc...) asparagine glycosylation is found at N106 and N172.

It belongs to the CRISP family. Venom allergen 5-like subfamily. As to expression, salivary gland (at protein level).

It localises to the secreted. Functionally, inhibits host platelet aggregation induced by low doses of collagen. This chain is Salivary antigen-5, found in Triatoma infestans (Assassin bug).